Here is a 1620-residue protein sequence, read N- to C-terminus: Probable serine/threonine-protein kinase gdt4 (1620 aa).

The N-terminal stretch at 1 to 19 is a signal peptide; it reads MKLEQRIFFLICLVINSFS. Topologically, residues 20–891 are extracellular; the sequence is NCSLLVAPDG…EVIGINEQLN (872 aa). A helical membrane pass occupies residues 892 to 912; it reads ILAIVLPITISLFAAASILAG. Residues 913–1620 lie on the Cytoplasmic side of the membrane; it reads YLVIKKYKKP…AKRNKKNQNQ (708 aa). A Protein kinase domain is found at 1349 to 1604; it reads IVLEKYLSEG…TLIDLLEKLL (256 aa). ATP is bound by residues 1355–1363 and K1376; that span reads LSEGSFGVV. Residue D1466 is the Proton acceptor of the active site.

In the N-terminal section; belongs to the GDT family. The protein in the C-terminal section; belongs to the protein kinase superfamily. TKL Ser/Thr protein kinase family.

The protein resides in the membrane. It carries out the reaction L-seryl-[protein] + ATP = O-phospho-L-seryl-[protein] + ADP + H(+). The catalysed reaction is L-threonyl-[protein] + ATP = O-phospho-L-threonyl-[protein] + ADP + H(+). This chain is Probable serine/threonine-protein kinase gdt4 (gdt4), found in Dictyostelium discoideum (Social amoeba).